The sequence spans 218 residues: Glutathione S-transferase Mu 4 (218 aa).

The GST N-terminal domain occupies 1–88 (MPMTLGYWDI…YIARKHNLCG (88 aa)). Residues 7 to 8 (YW), 46 to 50 (WLSEK), 59 to 60 (NL), and 72 to 73 (QS) each bind glutathione. In terms of domain architecture, GST C-terminal spans 90–208 (TEEEKIRVDI…KTSRFLRTPL (119 aa)). Y116 serves as a coordination point for substrate.

The protein belongs to the GST superfamily. Mu family. As to quaternary structure, homodimer. As to expression, widely expressed.

The protein resides in the cytoplasm. It catalyses the reaction RX + glutathione = an S-substituted glutathione + a halide anion + H(+). It carries out the reaction 1-chloro-2,4-dinitrobenzene + glutathione = 2,4-dinitrophenyl-S-glutathione + chloride + H(+). The enzyme catalyses (13S,14S)-epoxy-(4Z,7Z,9E,11E,16Z,19Z)-docosahexaenoate + glutathione = (13R)-S-glutathionyl-(14S)-hydroxy-(4Z,7Z,9E,11E,16Z,19Z)-docosahexaenoate. The catalysed reaction is leukotriene C4 = leukotriene A4 + glutathione. In terms of biological role, conjugation of reduced glutathione to a wide number of exogenous and endogenous hydrophobic electrophiles. Catalyzes the conjugation of leukotriene A4 with reduced glutathione (GSH) to form leukotriene C4. Can also catalyze the transfer of a glutathionyl group from glutathione (GSH) to 13(S),14(S)-epoxy-docosahexaenoic acid to form maresin conjugate in tissue regeneration 1 (MCTR1), a bioactive lipid mediator that possess potent anti-inflammatory and proresolving actions. This is Glutathione S-transferase Mu 4 from Mus musculus (Mouse).